Reading from the N-terminus, the 701-residue chain is Glycine--tRNA ligase beta subunit (701 aa).

The protein belongs to the class-II aminoacyl-tRNA synthetase family. As to quaternary structure, tetramer of two alpha and two beta subunits.

It is found in the cytoplasm. The catalysed reaction is tRNA(Gly) + glycine + ATP = glycyl-tRNA(Gly) + AMP + diphosphate. This chain is Glycine--tRNA ligase beta subunit, found in Helicobacter pylori (strain G27).